The primary structure comprises 31 residues: Cyclotide mden-M (31 aa).

A cross-link (cyclopeptide (Gly-Asn)) is located at residues 1–31 (GTIPCGESCVYIPCITSALGCSCKKKVCYKN). 3 disulfide bridges follow: Cys5-Cys21, Cys9-Cys23, and Cys14-Cys28.

The protein belongs to the cyclotide family. Bracelet subfamily. This is a cyclic peptide.

Its function is as follows. Probably participates in a plant defense mechanism. The protein is Cyclotide mden-M of Melicytus dentatus (Tree violet).